Consider the following 552-residue polypeptide: Dihydroxy-acid dehydratase (552 aa).

Residue aspartate 78 coordinates Mg(2+). Cysteine 119 is a [2Fe-2S] cluster binding site. Mg(2+) contacts are provided by aspartate 120 and lysine 121. Lysine 121 carries the post-translational modification N6-carboxylysine. Cysteine 191 contacts [2Fe-2S] cluster. Mg(2+) is bound at residue glutamate 442. The active-site Proton acceptor is serine 468.

The protein belongs to the IlvD/Edd family. As to quaternary structure, homodimer. [2Fe-2S] cluster serves as cofactor. Requires Mg(2+) as cofactor.

It catalyses the reaction (2R)-2,3-dihydroxy-3-methylbutanoate = 3-methyl-2-oxobutanoate + H2O. It carries out the reaction (2R,3R)-2,3-dihydroxy-3-methylpentanoate = (S)-3-methyl-2-oxopentanoate + H2O. It functions in the pathway amino-acid biosynthesis; L-isoleucine biosynthesis; L-isoleucine from 2-oxobutanoate: step 3/4. Its pathway is amino-acid biosynthesis; L-valine biosynthesis; L-valine from pyruvate: step 3/4. Functions in the biosynthesis of branched-chain amino acids. Catalyzes the dehydration of (2R,3R)-2,3-dihydroxy-3-methylpentanoate (2,3-dihydroxy-3-methylvalerate) into 2-oxo-3-methylpentanoate (2-oxo-3-methylvalerate) and of (2R)-2,3-dihydroxy-3-methylbutanoate (2,3-dihydroxyisovalerate) into 2-oxo-3-methylbutanoate (2-oxoisovalerate), the penultimate precursor to L-isoleucine and L-valine, respectively. This chain is Dihydroxy-acid dehydratase, found in Ruminiclostridium cellulolyticum (strain ATCC 35319 / DSM 5812 / JCM 6584 / H10) (Clostridium cellulolyticum).